Reading from the N-terminus, the 208-residue chain is Pyridoxine/pyridoxamine 5'-phosphate oxidase (208 aa).

FMN is bound by residues 53-58, 68-69, Lys75, and Gln100; these read RTVLLK and YS. Substrate is bound at residue Lys58. Tyr118, Arg122, and Ser126 together coordinate substrate. Residues 135-136 and Trp180 contribute to the FMN site; that span reads QS. 186–188 provides a ligand contact to substrate; it reads RLH. Arg190 is a binding site for FMN.

This sequence belongs to the pyridoxamine 5'-phosphate oxidase family. As to quaternary structure, homodimer. FMN serves as cofactor.

It carries out the reaction pyridoxamine 5'-phosphate + O2 + H2O = pyridoxal 5'-phosphate + H2O2 + NH4(+). The enzyme catalyses pyridoxine 5'-phosphate + O2 = pyridoxal 5'-phosphate + H2O2. It functions in the pathway cofactor metabolism; pyridoxal 5'-phosphate salvage; pyridoxal 5'-phosphate from pyridoxamine 5'-phosphate: step 1/1. The protein operates within cofactor metabolism; pyridoxal 5'-phosphate salvage; pyridoxal 5'-phosphate from pyridoxine 5'-phosphate: step 1/1. Functionally, catalyzes the oxidation of either pyridoxine 5'-phosphate (PNP) or pyridoxamine 5'-phosphate (PMP) into pyridoxal 5'-phosphate (PLP). The chain is Pyridoxine/pyridoxamine 5'-phosphate oxidase from Xylella fastidiosa (strain Temecula1 / ATCC 700964).